The chain runs to 65 residues: MAKGKDVRLVITLECTNCSQNPNKRFSGISRYTTSKNRRNTTNRLELKKFCPQCSVHTIHKEIKK.

The protein belongs to the bacterial ribosomal protein bL33 family.

It is found in the plastid. It localises to the chloroplast. This is Large ribosomal subunit protein bL33c from Chaetosphaeridium globosum (Charophycean green alga).